The following is a 338-amino-acid chain: 4'-phosphopantetheinyl transferase (338 aa).

This sequence belongs to the P-Pant transferase superfamily.

It catalyses the reaction apo-[ACP] + CoA = holo-[ACP] + adenosine 3',5'-bisphosphate + H(+). In terms of biological role, acyl-carrier-protein synthase that transfers the 4'-phosphopantetheine moiety from coenzyme A to a Ser of an acyl-carrier-protein. The 4'-phosphopantetheine (4'-PPT) portion of CoA provides the essential prosthetic group for a number of carrier proteins and multi-domain enzymes, priming them for the acceptance of acyl building blocks in fatty acid synthesis and many aspects of secondary metabolism mediated by polyketide synthases (PKSs) and non-ribosomal peptide synthetases (NRPSs). Plays a key role in liamocins biosynthesis by activationg the HR-PKS PKS1 that produces 3,5-dihydroxydecanoic acid, a precursor of liamocins. This is 4'-phosphopantetheinyl transferase from Aureobasidium melanogenum (Aureobasidium pullulans var. melanogenum).